The sequence spans 543 residues: MKKFLKYLAVFLVVLLIAAIAFLFRPIASKKIQTSANEPVVDVVLVGGGIMSATLGTYLTELEPNWQIRMYERLDRVAQESSNGFNNAGTGHSGFMEMNYTEEKDGKMDISKAVKVAEQFEISKQFWAYQVKHNVLGQPSSFINPVPHHAFVWGDNVAFLEKRYAAMIKNPLFYGMQFTENANQIKQWAPLTMEGRDPAQKVAATRMEIGSDVNYGAITTQLVNNLDKHQNFKLSTSSEVTGISQNDDKTWTVAFKNLKTGKADHVKTRFVFIGAGGASVKLLQMTGLPESKQYAGFPVGGVFLMTDNPKIAAEHTAKLYGRAELGAPPMSVPHIDTRYIDGKKYVLFGPFATYSNKFLKQGSQFDLLASTNKNNVLPMTAVGMENLDLVKYLVSQVMMTDEDRFNELKKYYPNAKREDWRLNQGGQRVQVIKKEEGKPAKLQFGTEVFVSKDRSVTALMGASPGASTSPYIMLNLLEKAFPQQVKGEWNPKLHEIVRSYKQDLSDNPVLLDQVRQYTSQTLGLHYTPLTQADFAKIAASQSK.

This sequence belongs to the MQO family. FAD is required as a cofactor.

It catalyses the reaction (S)-malate + a quinone = a quinol + oxaloacetate. Its pathway is carbohydrate metabolism; tricarboxylic acid cycle; oxaloacetate from (S)-malate (quinone route): step 1/1. The chain is Probable malate:quinone oxidoreductase from Acinetobacter baylyi (strain ATCC 33305 / BD413 / ADP1).